The sequence spans 668 residues: ATP-dependent RNA helicase MSS116, mitochondrial (668 aa).

A mitochondrion-targeting transit peptide spans 1 to 38; the sequence is MLKQLSRSLGIRSSPIVANLIRSKQVCTRGFHISLVKQ. The Q motif signature appears at 87 to 115; that stretch reads DFKGKGYIHDSIINSLHKNDFKELTPIQQ. The Helicase ATP-binding domain maps to 119–300; it reads VPIFNTEKGL…KKHIHPEYEF (182 aa). 132 to 139 provides a ligand contact to ATP; the sequence is AKTGTGKT. Positions 242–245 match the DEAD box motif; that stretch reads DEAD. Residues 332–501 form the Helicase C-terminal domain; it reads SLSELHGIMK…NIIDQIESPL (170 aa). The interval 585–668 is disordered; that stretch reads YSDFSRSGMS…EHRRIRDHDE (84 aa). The segment covering 586 to 597 has biased composition (polar residues); the sequence is SDFSRSGMSQRP. Over residues 609–636 the composition is skewed to low complexity; that stretch reads NGRGKYGNNRNNDWSYQNKNRYNNNNNR. Residues 637 to 668 are compositionally biased toward basic and acidic residues; sequence QTERSYDSDRKSHNDWKYEKKFEHRRIRDHDE.

This sequence belongs to the DEAD box helicase family. DDX18/HAS1 subfamily.

It is found in the mitochondrion matrix. It carries out the reaction ATP + H2O = ADP + phosphate + H(+). ATP-dependent RNA helicase required for mitochondrial splicing of group I and II introns. Also required for efficient mitochondrial translation. The polypeptide is ATP-dependent RNA helicase MSS116, mitochondrial (MSS116) (Candida albicans (strain SC5314 / ATCC MYA-2876) (Yeast)).